The following is a 456-amino-acid chain: Protein shifted (456 aa).

The signal sequence occupies residues M1–C30. Residues H34–N112 are disordered. Residues R44–H55 show a composition bias toward basic and acidic residues. N57 carries an N-linked (GlcNAc...) asparagine glycan. A compositionally biased stretch (basic residues) spans H77 to Q87. Over residues Q88–S107 the composition is skewed to gly residues. Residues L119 to C261 form the WIF domain. N-linked (GlcNAc...) asparagine glycosylation is found at N173, N217, and N227. 16 cysteine pairs are disulfide-bonded: C224–C261, C283–C293, C287–C299, C301–C310, C315–C325, C319–C331, C333–C342, C347–C357, C351–C363, C365–C374, C379–C389, C383–C395, C397–C406, C416–C423, C418–C429, and C431–C440. EGF-like domains are found at residues T279–E311, C315–C342, E343–E375, Y376–E407, and Q412–N441. N324 carries N-linked (GlcNAc...) asparagine glycosylation. Residue N420 is glycosylated (N-linked (GlcNAc...) asparagine).

As to quaternary structure, interacts with hh. At the blastoderm stage, it is ubiquitously expressed. As embryogenesis continues, it is expressed in the epidermis and central nervous system, this expression being segmentally modulated. Also highly expressed at the foregut and hindgut throughout embryogenesis. In third instar wing imaginal disks, it is highly expressed in the most anterior and posterior parts of the disk and weakly expressed at the antero/posterior (A/P) compartment border. In the leg disks and the antenna part of the eye-antennal imaginal disk it is also weakly expressed at the A/P compartment border. Weakly expressed in the morphogenetic furrow in the eye primordium.

The protein localises to the secreted. The protein resides in the extracellular space. Its subcellular location is the extracellular matrix. Its function is as follows. Required for normal accumulation and movement of lipid-modified hedgehog (hh) morphogen. May act by stabilizing the interaction between heparan sulfate proteoglycans (HSPGs) and hh, HSPGs being required for diffusion of hh morphogen. Not involved in wingless (wg) morphogen movement, suggesting that it may provide HSPG specificity for Hh. This is Protein shifted (shf) from Drosophila melanogaster (Fruit fly).